The sequence spans 309 residues: Tagatose-6-phosphate kinase (309 aa).

Belongs to the carbohydrate kinase PfkB family. LacC subfamily.

The enzyme catalyses D-tagatofuranose 6-phosphate + ATP = D-tagatofuranose 1,6-bisphosphate + ADP + H(+). The protein operates within carbohydrate metabolism; D-tagatose 6-phosphate degradation; D-glyceraldehyde 3-phosphate and glycerone phosphate from D-tagatose 6-phosphate: step 1/2. The chain is Tagatose-6-phosphate kinase from Streptococcus pyogenes serotype M12 (strain MGAS2096).